Here is a 72-residue protein sequence, read N- to C-terminus: Large ribosomal subunit protein bL28 (72 aa).

This sequence belongs to the bacterial ribosomal protein bL28 family.

The polypeptide is Large ribosomal subunit protein bL28 (Chlorobium luteolum (strain DSM 273 / BCRC 81028 / 2530) (Pelodictyon luteolum)).